Here is a 427-residue protein sequence, read N- to C-terminus: Enolase (427 aa).

A (2R)-2-phosphoglycerate-binding site is contributed by Gln-163. The active-site Proton donor is Glu-205. Mg(2+)-binding residues include Asp-242, Glu-285, and Asp-312. (2R)-2-phosphoglycerate contacts are provided by Lys-337, Arg-366, Ser-367, and Lys-388. The active-site Proton acceptor is the Lys-337.

This sequence belongs to the enolase family. The cofactor is Mg(2+).

The protein localises to the cytoplasm. It is found in the secreted. It localises to the cell surface. It catalyses the reaction (2R)-2-phosphoglycerate = phosphoenolpyruvate + H2O. It functions in the pathway carbohydrate degradation; glycolysis; pyruvate from D-glyceraldehyde 3-phosphate: step 4/5. Catalyzes the reversible conversion of 2-phosphoglycerate (2-PG) into phosphoenolpyruvate (PEP). It is essential for the degradation of carbohydrates via glycolysis. The protein is Enolase of Nitrosospira multiformis (strain ATCC 25196 / NCIMB 11849 / C 71).